The sequence spans 95 residues: Homeotic protein bicoid (95 aa).

Disordered stretches follow at residues 1–29 (NLEPLKSHTVVGLDKSCDDGSSDDMSTGM) and 42–63 (GKPSAAQAQPQPPPPPLGMMHD).

This sequence belongs to the paired homeobox family. Bicoid subfamily.

The protein resides in the nucleus. Bicoid is polarity protein that provides positional cues for the development of head and thoracic segments. BCD regulates the expression of zygotic genes, possibly through its homeodomain, and inhibits the activity of other maternal gene products. In Drosophila subobscura (Fruit fly), this protein is Homeotic protein bicoid (bcd).